We begin with the raw amino-acid sequence, 1038 residues long: Translation initiation factor IF-2 (1038 aa).

The tract at residues 32–442 is disordered; that stretch reads GSALASLSDE…RKGVNTAAPR (411 aa). Low complexity-rich tracts occupy residues 65-77, 100-113, and 131-147; these read PPTKDTPTAPVAP, PAEAADNPNAPAQP, and PKLAPAPEAKAPEAPAA. Composition is skewed to basic and acidic residues over residues 204-217 and 275-295; these read SGGRKAPESPKRES and RSLDRSRNRPEEAAKAGDAGK. The span at 311–328 shows a compositional bias: low complexity; that stretch reads PSAPAKPAAPTGSSGPAA. A compositionally biased stretch (basic and acidic residues) spans 331–344; that stretch reads PDIKLTRDVIEGHK. Over residues 422-435 the composition is skewed to basic residues; sequence HHYRRSRPRIRRKG. Residues 529–696 enclose the tr-type G domain; the sequence is ARPPVVTFLG…TLLTIAELNE (168 aa). Residues 538 to 545 are G1; it reads GHVDHGKT. Position 538 to 545 (538 to 545) interacts with GTP; it reads GHVDHGKT. The tract at residues 563–567 is G2; that stretch reads GITQH. The interval 584–587 is G3; the sequence is DTPG. Residues 584–588 and 638–641 each bind GTP; these read DTPGH and NKID. Residues 638 to 641 form a G4 region; the sequence is NKID. Residues 674-676 are G5; sequence SAT.

It belongs to the TRAFAC class translation factor GTPase superfamily. Classic translation factor GTPase family. IF-2 subfamily.

Its subcellular location is the cytoplasm. One of the essential components for the initiation of protein synthesis. Protects formylmethionyl-tRNA from spontaneous hydrolysis and promotes its binding to the 30S ribosomal subunits. Also involved in the hydrolysis of GTP during the formation of the 70S ribosomal complex. In Rhodopirellula baltica (strain DSM 10527 / NCIMB 13988 / SH1), this protein is Translation initiation factor IF-2.